Consider the following 389-residue polypeptide: Mannuronan synthase (389 aa).

Residues 16-116 form the PilZ domain; it reads QRQFARVKLP…EVAALRYLIT (101 aa).

It belongs to the Alg44 family.

It is found in the periplasm. It carries out the reaction [(1-&gt;4)-beta-D-mannuronosyl](n) + GDP-alpha-D-mannuronate = [(1-&gt;4)-beta-D-mannuronosyl](n+1) + GDP + H(+). Its pathway is glycan biosynthesis; alginate biosynthesis. Required for alginate biosynthesis. In Pseudomonas aeruginosa (strain ATCC 15692 / DSM 22644 / CIP 104116 / JCM 14847 / LMG 12228 / 1C / PRS 101 / PAO1), this protein is Mannuronan synthase (alg44).